Consider the following 483-residue polypeptide: Regulatory protein ViaA (483 aa).

The protein belongs to the ViaA family. Homodimer. Interacts with RavA.

It is found in the cytoplasm. Its function is as follows. Component of the RavA-ViaA chaperone complex, which may act on the membrane to optimize the function of some of the respiratory chains. ViaA stimulates the ATPase activity of RavA. In Cronobacter sakazakii (strain ATCC BAA-894) (Enterobacter sakazakii), this protein is Regulatory protein ViaA.